The primary structure comprises 367 residues: Alanine racemase (367 aa).

The active-site Proton acceptor; specific for D-alanine is the K40. N6-(pyridoxal phosphate)lysine is present on K40. A substrate-binding site is contributed by R136. The active-site Proton acceptor; specific for L-alanine is Y263. M310 is a substrate binding site.

Belongs to the alanine racemase family. It depends on pyridoxal 5'-phosphate as a cofactor.

The enzyme catalyses L-alanine = D-alanine. Its pathway is amino-acid biosynthesis; D-alanine biosynthesis; D-alanine from L-alanine: step 1/1. Its function is as follows. Catalyzes the interconversion of L-alanine and D-alanine. May also act on other amino acids. This is Alanine racemase (alr) from Streptococcus thermophilus (strain ATCC BAA-491 / LMD-9).